The primary structure comprises 289 residues: tRNA dimethylallyltransferase (289 aa).

9–16 (GTTASGKT) lines the ATP pocket. 11 to 16 (TASGKT) contributes to the substrate binding site. The interaction with substrate tRNA stretch occupies residues 34–37 (DSLC).

The protein belongs to the IPP transferase family. In terms of assembly, monomer. The cofactor is Mg(2+).

The enzyme catalyses adenosine(37) in tRNA + dimethylallyl diphosphate = N(6)-dimethylallyladenosine(37) in tRNA + diphosphate. Functionally, catalyzes the transfer of a dimethylallyl group onto the adenine at position 37 in tRNAs that read codons beginning with uridine, leading to the formation of N6-(dimethylallyl)adenosine (i(6)A). The polypeptide is tRNA dimethylallyltransferase (Campylobacter jejuni (strain RM1221)).